Here is a 258-residue protein sequence, read N- to C-terminus: Trypsin eta (258 aa).

Residues 1-22 (MNKVILRILALLFLLGIGAVSA) form the signal peptide. Positions 23–27 (QPDGR) are cleaved as a propeptide — activation peptide. Residues 28–258 (IVGGADTTNY…YFKDWIASRV (231 aa)) form the Peptidase S1 domain. An intrachain disulfide couples Cys59 to Cys75. Active-site charge relay system residues include His74 and Asp120. Cystine bridges form between Cys185–Cys200 and Cys211–Cys235. Residue Ser215 is the Charge relay system of the active site.

This sequence belongs to the peptidase S1 family.

It is found in the secreted. It localises to the extracellular space. The enzyme catalyses Preferential cleavage: Arg-|-Xaa, Lys-|-Xaa.. This is Trypsin eta (etaTry) from Drosophila erecta (Fruit fly).